The sequence spans 321 residues: Acetyl-coenzyme A carboxylase carboxyl transferase subunit alpha (321 aa).

Residues 39-293 (RLEVKSQALT…KRALAEALRQ (255 aa)) form the CoA carboxyltransferase C-terminal domain.

Belongs to the AccA family. As to quaternary structure, acetyl-CoA carboxylase is a heterohexamer composed of biotin carboxyl carrier protein (AccB), biotin carboxylase (AccC) and two subunits each of ACCase subunit alpha (AccA) and ACCase subunit beta (AccD).

Its subcellular location is the cytoplasm. The enzyme catalyses N(6)-carboxybiotinyl-L-lysyl-[protein] + acetyl-CoA = N(6)-biotinyl-L-lysyl-[protein] + malonyl-CoA. Its pathway is lipid metabolism; malonyl-CoA biosynthesis; malonyl-CoA from acetyl-CoA: step 1/1. Functionally, component of the acetyl coenzyme A carboxylase (ACC) complex. First, biotin carboxylase catalyzes the carboxylation of biotin on its carrier protein (BCCP) and then the CO(2) group is transferred by the carboxyltransferase to acetyl-CoA to form malonyl-CoA. The polypeptide is Acetyl-coenzyme A carboxylase carboxyl transferase subunit alpha (Azoarcus sp. (strain BH72)).